Consider the following 644-residue polypeptide: Threonine--tRNA ligase (644 aa).

The TGS domain occupies 1–62 (MSFSITLPDG…DSDSEVAIIT (62 aa)). A catalytic region spans residues 240 to 538 (DHRTIGRDLD…LTEIYKGAFP (299 aa)). The Zn(2+) site is built by cysteine 334, histidine 385, and histidine 515.

The protein belongs to the class-II aminoacyl-tRNA synthetase family. In terms of assembly, homodimer. Requires Zn(2+) as cofactor.

It is found in the cytoplasm. It catalyses the reaction tRNA(Thr) + L-threonine + ATP = L-threonyl-tRNA(Thr) + AMP + diphosphate + H(+). Functionally, catalyzes the attachment of threonine to tRNA(Thr) in a two-step reaction: L-threonine is first activated by ATP to form Thr-AMP and then transferred to the acceptor end of tRNA(Thr). Also edits incorrectly charged L-seryl-tRNA(Thr). This Lactobacillus helveticus (strain DPC 4571) protein is Threonine--tRNA ligase.